The sequence spans 500 residues: MLSTSSSRPFKSKFRAAFWPIYNYELGKFIPMSALMFCILFNQNILRILKDSILISEISAEIAGFAKVYCVTPAAALFVIIYAKMINHLTFEKIFYYLTAFFIGFFVLFAFVIYPNIHIFHVHPDYLADWMERYPHFKWYISLIGNWGYIVYYSLAELWPNIFYVLLFWQFANELTTTEEAKRFYTLFSLFGNSSLILVGFLMMNLSSKETIVKHFINISDSKITLVQISTILVTIVAVICCLLIRFISRNVFTNPLFYAKAKSGRSTSERMGIIKSFKYIVKSKYLWLLLICSAAFGFAINLVEAVWKAKIKELYPTVNTYAEFNSLYILWTGVAIMVMTIIGNNVMRMHNWFVAAVISPVIIMVTGVLFFVLIVFDQKILSLFDGAILMSPLALAVSIGGIQNILAKGTKYSIWDTSREMLYIPLDQELKTKGKAAVDVISAKVGKSSSGLVQSIIFTIIPTATFTSISPVLMVVFTFVCLAWIYAVRKIYFEYQKIA.

A run of 11 helical transmembrane segments spans residues 21 to 41 (IYNY…CILF), 62 to 82 (IAGF…VIIY), 94 to 114 (IFYY…FVIY), 149 to 169 (YIVY…LLFW), 184 to 204 (FYTL…FLMM), 224 to 244 (ITLV…CCLL), 287 to 307 (LWLL…VEAV), 328 to 348 (LYIL…NNVM), 357 to 377 (AVIS…LIVF), 381 to 401 (ILSL…VSIG), and 469 to 489 (SISP…IYAV).

The protein belongs to the ADP/ATP translocase tlc family.

It is found in the cell membrane. In terms of biological role, provides the rickettsial cell with host ATP in exchange for rickettsial ADP. This is an obligate exchange system. This energy acquiring activity is an important component of rickettsial parasitism. This is ADP,ATP carrier protein 5 (tlcE) from Rickettsia bellii (strain RML369-C).